A 253-amino-acid polypeptide reads, in one-letter code: MRILLSNDDGYLAPGLAALYEALRPLAEILVMAPEQNCSGASNSLTLSRPLSVSRSAATGFYYVNGTPTDSVHVALTGMLDTKPDLVVSGINNGQNMGDDTLYSGTVAAATEGIMFGVPAIAFSLVHKEWAHLGDAARVAAEIVRHYLDHPLPGQPLLNVNIPNLPYEELKGWRVTRLGKRHPSQPVIRQTNPRGEPIYWIGAAGDALDASEGTDFHATASGYVSITPLQLDLTHTQMLGATRDWARAGSGAS.

Asp8, Asp9, Ser39, and Asn92 together coordinate a divalent metal cation.

This sequence belongs to the SurE nucleotidase family. The cofactor is a divalent metal cation.

Its subcellular location is the cytoplasm. The enzyme catalyses a ribonucleoside 5'-phosphate + H2O = a ribonucleoside + phosphate. Functionally, nucleotidase that shows phosphatase activity on nucleoside 5'-monophosphates. This Burkholderia mallei (strain NCTC 10247) protein is 5'-nucleotidase SurE.